The chain runs to 369 residues: Serpentine receptor class epsilon-2 (369 aa).

Topologically, residues 1-20 (MLIQYHKISNNDPNRIQLLS) are extracellular. The chain crosses the membrane as a helical span at residues 21 to 41 (MIFCEIILLIFELFEFAAIIF). Residues 42–55 (NMSRYQFHFNLKVV) are Cytoplasmic-facing. A helical transmembrane segment spans residues 56–76 (VGYAIFAYWFDIIARITIAFF). Topologically, residues 77-118 (EIGLFNLDDQTIAVETEKLPWNYKNMFFMLLFCCSTYRVYFM) are extracellular. A helical transmembrane segment spans residues 119-139 (FLICSVTLLLAVERFLATIWV). Topologically, residues 140–148 (STYESVQHK) are cytoplasmic. A helical transmembrane segment spans residues 149 to 169 (WVSIVLTSTNSIAGIFGSLLF). Over 170-178 (HYELIFDTA) the chain is Extracellular. Residues 179–199 (VWCSLGLCFNFVSIFLYVILF) traverse the membrane as a helical segment. Residues 200 to 234 (NSNKSKIELCQTREITQSYTLSLRFQLNENLKIMN) lie on the Cytoplasmic side of the membrane. Residues 235–255 (WIKNSILVVTCFNTLLAGFLI) traverse the membrane as a helical segment. Residues 256–274 (ASNNEYLKNDYPVLVKCCH) are Extracellular-facing. A helical membrane pass occupies residues 275–295 (TFLNLGIAIYAQVVFFVAILA). The Cytoplasmic segment spans residues 296–369 (DRHFRTYFLR…VAKKKRFWRV (74 aa)).

This sequence belongs to the nematode receptor-like protein sre family.

It localises to the cell membrane. This Caenorhabditis elegans protein is Serpentine receptor class epsilon-2 (sre-2).